The primary structure comprises 55 residues: UPF0434 protein Erum1340/ERWE_CDS_01300 (55 aa).

Belongs to the UPF0434 family.

This is UPF0434 protein Erum1340/ERWE_CDS_01300 from Ehrlichia ruminantium (strain Welgevonden).